A 393-amino-acid polypeptide reads, in one-letter code: tRNA(Met) cytidine acetate ligase (393 aa).

3 residues coordinate ATP: G81, N142, and R167.

Belongs to the TmcAL family.

It localises to the cytoplasm. It catalyses the reaction cytidine(34) in elongator tRNA(Met) + acetate + ATP = N(4)-acetylcytidine(34) in elongator tRNA(Met) + AMP + diphosphate. In terms of biological role, catalyzes the formation of N(4)-acetylcytidine (ac(4)C) at the wobble position of elongator tRNA(Met), using acetate and ATP as substrates. First activates an acetate ion to form acetyladenylate (Ac-AMP) and then transfers the acetyl group to tRNA to form ac(4)C34. This is tRNA(Met) cytidine acetate ligase from Bacillus cereus (strain AH820).